The chain runs to 190 residues: Small ribosomal subunit protein eS7 (190 aa).

It belongs to the eukaryotic ribosomal protein eS7 family. As to quaternary structure, component of the small ribosomal subunit. Part of the small subunit (SSU) processome, composed of more than 70 proteins and the RNA chaperone small nucleolar RNA (snoRNA) U3.

The protein resides in the cytoplasm. Its subcellular location is the cytoskeleton. It localises to the microtubule organizing center. The protein localises to the centrosome. It is found in the nucleus. The protein resides in the nucleolus. Component of the small ribosomal subunit. The ribosome is a large ribonucleoprotein complex responsible for the synthesis of proteins in the cell. Required for rRNA maturation. Part of the small subunit (SSU) processome, first precursor of the small eukaryotic ribosomal subunit. During the assembly of the SSU processome in the nucleolus, many ribosome biogenesis factors, an RNA chaperone and ribosomal proteins associate with the nascent pre-rRNA and work in concert to generate RNA folding, modifications, rearrangements and cleavage as well as targeted degradation of pre-ribosomal RNA by the RNA exosome. This Spodoptera frugiperda (Fall armyworm) protein is Small ribosomal subunit protein eS7 (RpS7).